Here is a 320-residue protein sequence, read N- to C-terminus: MQTRKTFSWIKEEITRSISVLLMIYIITWASISNAYPIFAQQGYENPREATGRIVCANCHLANKPVDIEVPQAVLPDTVFEAVVRIPYDMQLKQVLANGKKGALNVGAVLILPEGFELAPPDRISPEMKEKMGNLSFQSYRPTKKNILVIGPVPGQKYSEITFPILSPDPAAKKDVHFLKYPIYVGGNRGRGQIYPDGSKSNNTVYNATAAGIVSKIIRKEKGGYEITITDASEGRQVIDIIPPGPELLVSEGESIKLDQPLTSNPNVGGFGQGDAEIVLQDPLRVQGLLFFLASVILAQIFLVLKKKQFEKVQLSEMNF.

Positions 1–35 (MQTRKTFSWIKEEITRSISVLLMIYIITWASISNA) are cleaved as a signal peptide. Heme is bound by residues Tyr36, Cys56, Cys59, and His60. The chain crosses the membrane as a helical span at residues 286 to 306 (VQGLLFFLASVILAQIFLVLK).

This sequence belongs to the cytochrome f family. In terms of assembly, the 4 large subunits of the cytochrome b6-f complex are cytochrome b6, subunit IV (17 kDa polypeptide, petD), cytochrome f and the Rieske protein, while the 4 small subunits are PetG, PetL, PetM and PetN. The complex functions as a dimer. Heme is required as a cofactor.

The protein localises to the plastid. Its subcellular location is the chloroplast thylakoid membrane. Component of the cytochrome b6-f complex, which mediates electron transfer between photosystem II (PSII) and photosystem I (PSI), cyclic electron flow around PSI, and state transitions. The polypeptide is Cytochrome f (Manihot esculenta (Cassava)).